We begin with the raw amino-acid sequence, 159 residues long: 2-C-methyl-D-erythritol 2,4-cyclodiphosphate synthase (159 aa).

The a divalent metal cation site is built by aspartate 10 and histidine 12. Residues 10–12 (DVH) and 37–38 (HS) contribute to the 4-CDP-2-C-methyl-D-erythritol 2-phosphate site. Histidine 45 is an a divalent metal cation binding site. Residues 59–61 (DIG), 64–68 (FLDTD), 103–109 (AQAPKML), 135–138 (TTTE), phenylalanine 142, and arginine 145 each bind 4-CDP-2-C-methyl-D-erythritol 2-phosphate.

This sequence belongs to the IspF family. Homotrimer. A divalent metal cation is required as a cofactor.

The enzyme catalyses 4-CDP-2-C-methyl-D-erythritol 2-phosphate = 2-C-methyl-D-erythritol 2,4-cyclic diphosphate + CMP. Its pathway is isoprenoid biosynthesis; isopentenyl diphosphate biosynthesis via DXP pathway; isopentenyl diphosphate from 1-deoxy-D-xylulose 5-phosphate: step 4/6. In terms of biological role, involved in the biosynthesis of isopentenyl diphosphate (IPP) and dimethylallyl diphosphate (DMAPP), two major building blocks of isoprenoid compounds. Catalyzes the conversion of 4-diphosphocytidyl-2-C-methyl-D-erythritol 2-phosphate (CDP-ME2P) to 2-C-methyl-D-erythritol 2,4-cyclodiphosphate (ME-CPP) with a corresponding release of cytidine 5-monophosphate (CMP). This chain is 2-C-methyl-D-erythritol 2,4-cyclodiphosphate synthase, found in Francisella tularensis subsp. tularensis (strain FSC 198).